A 740-amino-acid chain; its full sequence is Catalase-peroxidase (740 aa).

Residues Met1–Gln44 are disordered. The segment at residues Trp109–Tyr231 is a cross-link (tryptophyl-tyrosyl-methioninium (Trp-Tyr) (with M-257)). Residue His110 is the Proton acceptor of the active site. Residues Tyr231 to Met257 constitute a cross-link (tryptophyl-tyrosyl-methioninium (Tyr-Met) (with W-109)). Position 272 (His272) interacts with heme b.

The protein belongs to the peroxidase family. Peroxidase/catalase subfamily. In terms of assembly, homodimer or homotetramer. Heme b is required as a cofactor. Formation of the three residue Trp-Tyr-Met cross-link is important for the catalase, but not the peroxidase activity of the enzyme.

It catalyses the reaction H2O2 + AH2 = A + 2 H2O. It carries out the reaction 2 H2O2 = O2 + 2 H2O. Bifunctional enzyme with both catalase and broad-spectrum peroxidase activity. In Rhodococcus erythropolis (strain PR4 / NBRC 100887), this protein is Catalase-peroxidase.